The primary structure comprises 164 residues: Transcription elongation factor GreA (164 aa).

Residues 50 to 75 (YHAAREEQGQQEARIRQLQDLLNIAK) adopt a coiled-coil conformation.

It belongs to the GreA/GreB family.

Functionally, necessary for efficient RNA polymerase transcription elongation past template-encoded arresting sites. The arresting sites in DNA have the property of trapping a certain fraction of elongating RNA polymerases that pass through, resulting in locked ternary complexes. Cleavage of the nascent transcript by cleavage factors such as GreA or GreB allows the resumption of elongation from the new 3'terminus. GreA releases sequences of 2 to 3 nucleotides. The chain is Transcription elongation factor GreA from Mycobacterium leprae (strain Br4923).